The sequence spans 129 residues: Snaclec coagulation factor IX/factor X-binding protein subunit B3 (129 aa).

The first 8 residues, 1–8 (LSLSGTAA), serve as a signal peptide directing secretion. 3 cysteine pairs are disulfide-bonded: Cys10-Cys21, Cys38-Cys127, and Cys104-Cys119. A C-type lectin domain is found at 17-128 (YEGHCYKPFN…CRMMANFVCE (112 aa)).

The protein belongs to the snaclec family. As to quaternary structure, heterodimer of subunits A and B3; disulfide-linked. In terms of tissue distribution, expressed by the venom gland.

It is found in the secreted. Its function is as follows. Anticoagulant protein which binds to the gamma-carboxyglutamic acid-domain regions of factors IX (F9) and factor X (F10) in the presence of calcium with a 1 to 1 stoichiometry. This chain is Snaclec coagulation factor IX/factor X-binding protein subunit B3, found in Trimeresurus stejnegeri (Chinese green tree viper).